A 241-amino-acid polypeptide reads, in one-letter code: Small ribosomal subunit protein uS2 (241 aa).

This sequence belongs to the universal ribosomal protein uS2 family.

The protein is Small ribosomal subunit protein uS2 of Yersinia pestis bv. Antiqua (strain Antiqua).